Consider the following 620-residue polypeptide: Sodium-dependent dopamine transporter (620 aa).

The Cytoplasmic segment spans residues 1 to 56 (MSKSKCSVGLMSSVVAPAKEPNAMGPKEVELILVKEQNGVQLTSSTLTNPRQSPVE). Residues 57–95 (AQDRETWGKKIDFLLSVIGFAVDLANVWRFPYLCYKNGG) traverse the membrane as a discontinuously helical segment. Residues Gly-75, Ala-77, Val-78, Asp-79, and Asn-82 each coordinate Na(+). Residue Asp-79 coordinates dopamine. The next 2 membrane-spanning stretches (helical) occupy residues 96–127 (GAFL…NREG) and 128–171 (AAGV…FSSF). Dopamine is bound by residues Ser-149 and Gly-153. The Extracellular segment spans residues 172–236 (TTELPWIHCN…SHGIDDLGPP (65 aa)). Cys-180 and Cys-189 are oxidised to a cystine. 3 N-linked (GlcNAc...) asparagine glycosylation sites follow: Asn-181, Asn-188, and Asn-205. 2 helical membrane-spanning segments follow: residues 237–256 (RWQL…FSLW) and 257–287 (KGVK…GVTL). The Extracellular portion of the chain corresponds to 288 to 306 (PGAIDGIRAYLSVDFYRLC). A discontinuously helical transmembrane segment spans residues 307-335 (EASVWIDAATQVCFSLGVGFGVLIAFSSY). Gln-317 is a binding site for chloride. A dopamine-binding site is contributed by Phe-320. Ser-321 and Asn-353 together coordinate Na(+). Ser-321 contacts chloride. Residues 336–376 (NKFTNNCYRDAIVTTSINSLTSFSSGFVVFSFLGYMAQKHS) traverse the membrane as a helical segment. Residue Ser-357 participates in chloride binding. Over 377-400 (VPIGDVAKDGPGLIFIIYPEAIAT) the chain is Extracellular. A run of 3 helical transmembrane segments spans residues 401–442 (LPLS…QLLH), 443–466 (RHRE…CVTN), and 467–499 (GGIY…AWFY). Na(+) is bound by residues Leu-418, Asp-421, and Ser-422. Residues Ser-422 and Ala-423 each contribute to the dopamine site. Residues 500-516 (GVGQFSDDIQQMTGQRP) lie on the Cytoplasmic side of the membrane. Residues 517–542 (SLYWRLCWKLVSPCFLLFVVVVSIVT) form a helical membrane-spanning segment. Residues 543 to 553 (FRPPHYGAYIF) lie on the Extracellular side of the membrane. The chain crosses the membrane as a helical span at residues 554–583 (PDWANALGWVIATSSMAMVPIYAAYKFCSL). The interaction with TGFB1I1 stretch occupies residues 561 to 590 (GWVIATSSMAMVPIYAAYKFCSLPGSFREK). The Cytoplasmic portion of the chain corresponds to 584 to 620 (PGSFREKLAYAIAPEKDRELVDRGEVRQFTLRHWLKV).

The protein belongs to the sodium:neurotransmitter symporter (SNF) (TC 2.A.22) family. SLC6A3 subfamily. In terms of assembly, monomer. Homooligomer; disulfide-linked. Interacts with PRKCABP and TGFB1I1. Interacts (via N-terminus) with SYNGR3 (via N-terminus). Interacts with SLC18A2. Interacts with TOR1A (ATP-bound); TOR1A regulates SLC6A3 subcellular location. Interacts with alpha-synuclein/SNCA. Interacts with SEPTIN4.

It is found in the cell membrane. Its subcellular location is the cell projection. The protein resides in the neuron projection. The protein localises to the axon. The catalysed reaction is dopamine(out) + chloride(out) + Na(+)(out) = dopamine(in) + chloride(in) + Na(+)(in). The enzyme catalyses (R)-noradrenaline(out) + chloride(out) + Na(+)(out) = (R)-noradrenaline(in) + chloride(in) + Na(+)(in). It carries out the reaction dopamine(out) + chloride(out) + 2 Na(+)(out) = dopamine(in) + chloride(in) + 2 Na(+)(in). Inhibited by zinc ions. Functionally, mediates sodium- and chloride-dependent transport of dopamine. Also mediates sodium- and chloride-dependent transport of norepinephrine (also known as noradrenaline). Regulator of light-dependent retinal hyaloid vessel regression, downstream of OPN5 signaling. The protein is Sodium-dependent dopamine transporter (SLC6A3) of Macaca fascicularis (Crab-eating macaque).